The chain runs to 423 residues: Protein IQ-DOMAIN 16 (423 aa).

IQ domains follow at residues 99–127 (RHWAAIIIQTAFRGYLSRRALRALKGIVK) and 128–150 (LQALVRGNNVRNQAKLTLRCIKA). Residues 231–251 (QKKLEIAIKREKAQALALSNQ) are a coiled coil. The interval 235–252 (EIAIKREKAQALALSNQI) is calmodulin-binding.

Belongs to the IQD family. Binds to multiple calmodulin (CaM) in the presence of Ca(2+) and CaM-like proteins.

The protein localises to the cytoplasm. It localises to the cytoskeleton. Its subcellular location is the cell membrane. Functionally, may be involved in cooperative interactions with calmodulins or calmodulin-like proteins. Recruits calmodulin proteins to microtubules, thus being a potential scaffold in cellular signaling and trafficking. Regulates cell shape and elongation in aerial organs (i.e. cotyledons, leaves, and hypocotyls) probably by regulating cortical microtubules (MT) arrays orientation. May associate with nucleic acids and regulate gene expression at the transcriptional or post-transcriptional level. This chain is Protein IQ-DOMAIN 16, found in Arabidopsis thaliana (Mouse-ear cress).